Consider the following 504-residue polypeptide: Catalase (504 aa).

Catalysis depends on residues His56 and Asn129. A heme-binding site is contributed by Tyr339.

This sequence belongs to the catalase family. As to quaternary structure, homodimer. It depends on heme as a cofactor.

The catalysed reaction is 2 H2O2 = O2 + 2 H2O. Decomposes hydrogen peroxide into water and oxygen; serves to protect cells from the toxic effects of hydrogen peroxide. In Staphylococcus epidermidis, this protein is Catalase (katA).